Consider the following 326-residue polypeptide: UDP-N-acetylglucosamine transporter (326 aa).

The next 8 membrane-spanning stretches (helical) occupy residues 4–24 (NLKY…VLTM), 38–58 (LSST…IFLV), 136–156 (LGMY…FVQW), 174–194 (FVGL…GVYF), 212–232 (LGFF…GELV), 243–263 (QLTW…AAVI), 269–289 (ILKG…SYFW), and 293–313 (FVPT…TFLY).

It belongs to the nucleotide-sugar transporter family. SLC35A subfamily. As to quaternary structure, interacts with SLC35A2; the interaction is reduced in the presence of SLC35A4. Found in a complex with SLC35A2 and SLC35A4. Interacts with MGAT4B. O-Glcnacylation regulates the stability of SLC35A3 and the specific complex formation with MGAT4B.

It localises to the golgi apparatus membrane. The catalysed reaction is UMP(out) + UDP-N-acetyl-alpha-D-glucosamine(in) = UMP(in) + UDP-N-acetyl-alpha-D-glucosamine(out). Transports diphosphate-N-acetylglucosamine (UDP-GlcNAc) from the cytosol into the lumen of the Golgi apparatus, functioning as an antiporter that exchanges UDP-N-acetyl-alpha-D-glucosamine for UMP. May supply UDP-GlcNAc as substrate for Golgi-resident glycosyltransferases that generate highly branched, multiantennary complex N-glycans and keratan sulfate. However, the exact role of SLC35A3 still needs to be elucidated, it could be a member of a catalytically more efficient multiprotein complex rather than function independently as a single transporter. The protein is UDP-N-acetylglucosamine transporter (Slc35a3) of Rattus norvegicus (Rat).